We begin with the raw amino-acid sequence, 159 residues long: Probable RNA-binding protein EIF1AD (159 aa).

Residues 18-93 (MMEDDYALPT…VKAEICKILT (76 aa)) enclose the S1-like domain. The disordered stretch occupies residues 109 to 159 (KFTKKPVQEEATSQNKDDSDFEDDLLPNTNRPVNRDSSDEEEDEETSSEED). A compositionally biased stretch (acidic residues) spans 146–159 (SDEEEDEETSSEED).

Belongs to the EIF1AD family.

In Drosophila melanogaster (Fruit fly), this protein is Probable RNA-binding protein EIF1AD.